A 477-amino-acid chain; its full sequence is E3 ubiquitin-protein ligase TRIM17 (477 aa).

The RING-type zinc finger occupies 16–66 (CSICLDYFTDPVMTACGHNFCRECIQMSWEKGKGKKGKKKQKGSFPCPECR). A B box-type zinc finger spans residues 94–135 (HKRDLCQIHQEPLKLFCQDDQTPICVVCREAQEHRMHRVLPL). Zn(2+)-binding residues include C99, H102, C121, and H127. Residues 135–225 (LDEAAREYKL…GKLQDSKASL (91 aa)) adopt a coiled-coil conformation. Residues 276 to 475 (AIKTVCRVPG…MVISTVTMWV (200 aa)) form the B30.2/SPRY domain.

It belongs to the TRIM/RBCC family. Interacts (via coiled coil) with TRIM44 (via coiled coil). Interacts with TRIM28; this interaction prevents TRIM28 activity on BCL2A1. Interacts with TRIM41; this interaction prevents TRIM41 activity on ZSCAN2. Interacts with BECN1. Interacts with NFATC3 and NFATC4; these interactions prevent NFATC3 and NFATC4 nuclear localization. Post-translationally, auto-ubiquitinated. In terms of tissue distribution, expressed almost exclusively in the testis.

The protein localises to the cytoplasm. The protein resides in the lysosome. The catalysed reaction is S-ubiquitinyl-[E2 ubiquitin-conjugating enzyme]-L-cysteine + [acceptor protein]-L-lysine = [E2 ubiquitin-conjugating enzyme]-L-cysteine + N(6)-ubiquitinyl-[acceptor protein]-L-lysine.. Its pathway is protein modification; protein ubiquitination. E3 ubiquitin ligase that plays important roles in the regulation of neuronal apoptosis, selective autophagy or cell proliferation. Stimulates the degradation of kinetochore ZW10 interacting protein ZWINT in a proteasome-dependent manner, leading to negative regulation of cell proliferation. Inhibits autophagic degradation of diverse known targets while contributing to autophagy of midbodies. Autophagy-inhibitory activity involves MCL1, which TRIM17 assembles into complexes with the key autophagy regulator BECN1. Controls neuronal apoptosis by mediating ubiquitination and degradation of MCL1 to initiate neuronal death. In addition, regulates NFAT transcription factors NFATC3 and NFATC4 activities by preventing their nuclear localization, thus inhibiting their transcriptional activities. Decreases TRIM41-mediated degradation of ZSCAN2 thereby stimulating alpha-synuclein/SNCA transcription in neuronal cells. Prevents the E3 ubiquitin-ligase activity of TRIM28 and its interaction with anti-apoptotic BCL2A1, blocking TRIM28 from ubiquitinating BCL2A1. The polypeptide is E3 ubiquitin-protein ligase TRIM17 (Trim17) (Rattus norvegicus (Rat)).